Here is a 566-residue protein sequence, read N- to C-terminus: Glucose starvation modulator protein 1 (566 aa).

Residues 20-48 constitute a DNA-binding region (zn(2)-C6 fungal-type); it reads CVFCHQKHLQCSNERPCKNCVKRNIAHGC. Disordered stretches follow at residues 65–93 and 250–270; these read PGAVSNKQSTPRKKLKTGPVSTSVSPMDS and KQASPSPSNTSTSENNTNTLS. The segment covering 83-93 has biased composition (polar residues); sequence PVSTSVSPMDS. The segment covering 253-270 has biased composition (low complexity); sequence SPSPSNTSTSENNTNTLS.

Belongs to the ERT1/acuK family.

The protein localises to the nucleus. Functionally, transcription factor which regulates nonfermentable carbon utilization. This Candida albicans (strain SC5314 / ATCC MYA-2876) (Yeast) protein is Glucose starvation modulator protein 1 (ZCF23).